Here is a 500-residue protein sequence, read N- to C-terminus: Serine carboxypeptidase 3 (500 aa).

The signal sequence occupies residues 1–21 (MATTPRLASLLLLLALCAAAA). Residues 22–73 (GALRLPPDASFPGAQAERLIRALNLLPGRPRRGLGAGAEDVAPGQLLERRVT) constitute a propeptide that is removed on maturation. 3 cysteine pairs are disulfide-bonded: cysteine 126–cysteine 366, cysteine 294–cysteine 309, and cysteine 332–cysteine 337. N-linked (GlcNAc...) asparagine glycosylation occurs at asparagine 144. Serine 216 is an active-site residue. Aspartate 404 is an active-site residue. Residue cysteine 407 coordinates substrate. Histidine 461 is a catalytic residue. A propeptide spanning residues 485 to 500 (ESVPEEEPATTFYAAI) is cleaved from the precursor.

Belongs to the peptidase S10 family. Monomer.

It carries out the reaction Release of a C-terminal amino acid with broad specificity.. The polypeptide is Serine carboxypeptidase 3 (CBP3) (Triticum aestivum (Wheat)).